A 444-amino-acid chain; its full sequence is Exodeoxyribonuclease 7 large subunit (444 aa).

The protein belongs to the XseA family. As to quaternary structure, heterooligomer composed of large and small subunits.

The protein localises to the cytoplasm. The catalysed reaction is Exonucleolytic cleavage in either 5'- to 3'- or 3'- to 5'-direction to yield nucleoside 5'-phosphates.. Its function is as follows. Bidirectionally degrades single-stranded DNA into large acid-insoluble oligonucleotides, which are then degraded further into small acid-soluble oligonucleotides. The sequence is that of Exodeoxyribonuclease 7 large subunit from Hahella chejuensis (strain KCTC 2396).